The chain runs to 83 residues: Delta-conotoxin-like Ac6.1 (83 aa).

The first 22 residues, 1–22 (MKLTCVVIVAVLFLTAWTFVMA), serve as a signal peptide directing secretion. Positions 23-51 (DDSRYGLKDLFPKARHEMKNPEASKLNKR) are excised as a propeptide. Disulfide bonds link C54–C69, C61–C73, and C68–C78. 4-hydroxyproline is present on residues P57 and P65.

This sequence belongs to the conotoxin O1 superfamily. In terms of tissue distribution, expressed by the venom duct.

It is found in the secreted. In terms of biological role, delta-conotoxins bind to site 6 of voltage-gated sodium channels (Nav) and inhibit the inactivation process. The polypeptide is Delta-conotoxin-like Ac6.1 (Conus achatinus (Little frog cone)).